The primary structure comprises 467 residues: 3-isopropylmalate dehydratase large subunit (467 aa).

Positions 347, 407, and 410 each coordinate [4Fe-4S] cluster.

Belongs to the aconitase/IPM isomerase family. LeuC type 1 subfamily. Heterodimer of LeuC and LeuD. It depends on [4Fe-4S] cluster as a cofactor.

The catalysed reaction is (2R,3S)-3-isopropylmalate = (2S)-2-isopropylmalate. It functions in the pathway amino-acid biosynthesis; L-leucine biosynthesis; L-leucine from 3-methyl-2-oxobutanoate: step 2/4. Functionally, catalyzes the isomerization between 2-isopropylmalate and 3-isopropylmalate, via the formation of 2-isopropylmaleate. The polypeptide is 3-isopropylmalate dehydratase large subunit (Picosynechococcus sp. (strain ATCC 27264 / PCC 7002 / PR-6) (Agmenellum quadruplicatum)).